Consider the following 366-residue polypeptide: Ubiquitin carboxyl-terminal hydrolase 46 (366 aa).

The USP domain occupies 35-365; sequence FGLVNFGNTC…SGYILFYQSR (331 aa). The active-site Nucleophile is the Cys-44. Residues Cys-182, Cys-185, Cys-229, and Cys-232 each coordinate Zn(2+). The active-site Proton acceptor is the His-313.

It belongs to the peptidase C19 family. USP12/USP46 subfamily. Interacts with WDR48. Interacts with WDR20. Interacts with DMWD. Component of the USP46/WDR20/WDR48 deubiquitinating complex. As to expression, detected in lung and spleen, and at lower levels in brain, kidney, testis and liver.

It localises to the cytoplasm. It catalyses the reaction Thiol-dependent hydrolysis of ester, thioester, amide, peptide and isopeptide bonds formed by the C-terminal Gly of ubiquitin (a 76-residue protein attached to proteins as an intracellular targeting signal).. Its function is as follows. Deubiquitinating enzyme that plays a role in behavior, possibly by regulating GABA action. May act by mediating the deubiquitination of GAD1/GAD67. Has almost no deubiquitinating activity by itself and requires the interaction with WDR48 to have a high activity. Not involved in deubiquitination of monoubiquitinated FANCD2. This Rattus norvegicus (Rat) protein is Ubiquitin carboxyl-terminal hydrolase 46.